Here is a 571-residue protein sequence, read N- to C-terminus: Proline--tRNA ligase (571 aa).

This sequence belongs to the class-II aminoacyl-tRNA synthetase family. ProS type 1 subfamily. As to quaternary structure, homodimer.

It is found in the cytoplasm. It carries out the reaction tRNA(Pro) + L-proline + ATP = L-prolyl-tRNA(Pro) + AMP + diphosphate. Catalyzes the attachment of proline to tRNA(Pro) in a two-step reaction: proline is first activated by ATP to form Pro-AMP and then transferred to the acceptor end of tRNA(Pro). As ProRS can inadvertently accommodate and process non-cognate amino acids such as alanine and cysteine, to avoid such errors it has two additional distinct editing activities against alanine. One activity is designated as 'pretransfer' editing and involves the tRNA(Pro)-independent hydrolysis of activated Ala-AMP. The other activity is designated 'posttransfer' editing and involves deacylation of mischarged Ala-tRNA(Pro). The misacylated Cys-tRNA(Pro) is not edited by ProRS. This is Proline--tRNA ligase from Pseudomonas fluorescens (strain ATCC BAA-477 / NRRL B-23932 / Pf-5).